We begin with the raw amino-acid sequence, 351 residues long: Dihydroorotate dehydrogenase (quinone) (351 aa).

Residues 61 to 65 and threonine 85 contribute to the FMN site; that span reads AGLDK. Residue lysine 65 participates in substrate binding. 110 to 114 contributes to the substrate binding site; that stretch reads NRMGF. Residues asparagine 139 and asparagine 172 each coordinate FMN. Substrate is bound at residue asparagine 172. The active-site Nucleophile is the serine 175. Asparagine 177 provides a ligand contact to substrate. Lysine 217 and threonine 245 together coordinate FMN. Residue 246–247 participates in substrate binding; that stretch reads NT. Residues glycine 268, glycine 297, and 318-319 contribute to the FMN site; that span reads YS.

It belongs to the dihydroorotate dehydrogenase family. Type 2 subfamily. In terms of assembly, monomer. The cofactor is FMN.

It is found in the cell membrane. The enzyme catalyses (S)-dihydroorotate + a quinone = orotate + a quinol. The protein operates within pyrimidine metabolism; UMP biosynthesis via de novo pathway; orotate from (S)-dihydroorotate (quinone route): step 1/1. Functionally, catalyzes the conversion of dihydroorotate to orotate with quinone as electron acceptor. In Xanthomonas oryzae pv. oryzae (strain MAFF 311018), this protein is Dihydroorotate dehydrogenase (quinone).